A 794-amino-acid chain; its full sequence is Elongator complex protein 2 (794 aa).

13 WD repeats span residues 55–93 (EHTK…TTKS), 98–140 (GHTS…YVCF), 147–188 (DGFC…AGEG), 203–244 (GHED…KEQM), 286–328 (GHEG…IWLE), 337–376 (GNSV…PQLW), 384–423 (GHYG…GANP), 433–472 (IHGY…ENFR), 557–601 (GHGY…QIQK), 604–643 (GHQL…VSYQ), 654–693 (VHTR…KESS), 705–751 (LKNE…WKLL), and 759–794 (AHHL…IKLT).

This sequence belongs to the WD repeat ELP2 family. In terms of assembly, component of the elongator complex composed of Elp1, Elp2, Elp3, Elp4, Elp5 and Elp6. The elongator complex associates with and stabilizes microtubules; efficient interaction requires the full complex.

The protein resides in the cytoplasm. It localises to the nucleus. The protein localises to the cytoskeleton. It is found in the spindle. The protein operates within tRNA modification; 5-methoxycarbonylmethyl-2-thiouridine-tRNA biosynthesis. Its function is as follows. Component of the elongator complex, which is required for multiple tRNA modifications, including mcm5U (5-methoxycarbonylmethyl uridine), mcm5s2U (5-methoxycarbonylmethyl-2-thiouridine), and ncm5U (5-carbamoylmethyl uridine). The elongator complex catalyzes the formation of carboxymethyluridine in the wobble base at position 34 in tRNAs. Binding by the elongator complex stabilizes microtubules and promotes their growth. This induces central spindle asymmetry, promoting polarized signaling endosome trafficking during asymmetric cell division and cell fate assignation of sensory organ precursor cells. Involved in the regulation of the STAT pathway. The protein is Elongator complex protein 2 of Drosophila melanogaster (Fruit fly).